Consider the following 317-residue polypeptide: Melanocyte-stimulating hormone receptor (317 aa).

Residues 1 to 37 (MPVQGSQRRLLGSLNSTPTATPHLGLAANQTGARCLE) are Extracellular-facing. A glycan (N-linked (GlcNAc...) asparagine) is linked at asparagine 29. Residues 38–63 (VSVPDGLFLSLGLVSLVENVLVVTAI) traverse the membrane as a helical segment. Topologically, residues 64–72 (AKNRNLHSP) are cytoplasmic. The chain crosses the membrane as a helical span at residues 73 to 93 (MYCFICCLALSDLLVSGSNML). Residues 94 to 118 (ETAVTLLLEAGVLAARAAVVQQLDN) lie on the Extracellular side of the membrane. Residues 119–140 (VIDVITCSSMLSSLCFLGAIAV) traverse the membrane as a helical segment. The Cytoplasmic portion of the chain corresponds to 141–163 (DRYISIFYALRYHSIVTLPRARR). The helical transmembrane segment at 164 to 183 (AVAAIWVASVLFSTLFIAYY) threads the bilayer. Residues 184–191 (DHAAVLLC) lie on the Extracellular side of the membrane. A helical transmembrane segment spans residues 192 to 211 (LVIFFLAMLVLMAVLYVHML). Residues 212–240 (ARACQHAQGIARLHKRQRLAHQGFGLKGA) lie on the Cytoplasmic side of the membrane. The chain crosses the membrane as a helical span at residues 241–266 (ATLTILLGIFFLCWGPFFLHLTLIVL). Topologically, residues 267–279 (CPQHPTCSCIFKN) are extracellular. A helical transmembrane segment spans residues 280-300 (FNLFLALIICNAIIDPLIYAF). The Cytoplasmic segment spans residues 301 to 317 (RSQELRRTLKEVLLCSW). A lipid anchor (S-palmitoyl cysteine) is attached at cysteine 315.

The protein belongs to the G-protein coupled receptor 1 family. In terms of assembly, interacts with MGRN1, but does not undergo MGRN1-mediated ubiquitination; this interaction competes with GNAS-binding and thus inhibits agonist-induced cAMP production. Interacts with OPN3; the interaction results in a decrease in MC1R-mediated cAMP signaling and ultimately a decrease in melanin production in melanocytes.

It localises to the cell membrane. Its function is as follows. Receptor for MSH (alpha, beta and gamma) and ACTH. The activity of this receptor is mediated by G proteins which activate adenylate cyclase. Mediates melanogenesis, the production of eumelanin (black/brown) and phaeomelanin (red/yellow), via regulation of cAMP signaling in melanocytes. The protein is Melanocyte-stimulating hormone receptor (MC1R) of Papio anubis (Olive baboon).